The chain runs to 518 residues: uncharacterized protein (518 aa).

The protein belongs to the MG032/MG096/MG288 family.

This is an uncharacterized protein from Mycoplasma pneumoniae (strain ATCC 29342 / M129 / Subtype 1) (Mycoplasmoides pneumoniae).